A 238-amino-acid chain; its full sequence is Ribitol-5-phosphate cytidylyltransferase 2 (238 aa).

CTP-binding positions include 7-10 (LAGG) and 81-87 (GTDRNET).

The protein belongs to the IspD/TarI cytidylyltransferase family. TarI subfamily. As to quaternary structure, heterodimer together with TarJ.

The catalysed reaction is D-ribitol 5-phosphate + CTP + H(+) = CDP-L-ribitol + diphosphate. The protein operates within cell wall biogenesis; poly(ribitol phosphate) teichoic acid biosynthesis. Functionally, catalyzes the transfer of the cytidylyl group of CTP to D-ribitol 5-phosphate. The sequence is that of Ribitol-5-phosphate cytidylyltransferase 2 from Staphylococcus aureus (strain NCTC 8325 / PS 47).